Consider the following 220-residue polypeptide: Ribosomal RNA small subunit methyltransferase G (220 aa).

The S-adenosyl-L-methionine site is built by glycine 78, leucine 83, and arginine 144.

The protein belongs to the methyltransferase superfamily. RNA methyltransferase RsmG family.

It is found in the cytoplasm. It catalyses the reaction guanosine(527) in 16S rRNA + S-adenosyl-L-methionine = N(7)-methylguanosine(527) in 16S rRNA + S-adenosyl-L-homocysteine. In terms of biological role, specifically methylates the N7 position of guanine in position 527 of 16S rRNA. The protein is Ribosomal RNA small subunit methyltransferase G of Alkalilimnicola ehrlichii (strain ATCC BAA-1101 / DSM 17681 / MLHE-1).